The following is a 232-amino-acid chain: 7-cyano-7-deazaguanine synthase 1 (232 aa).

Position 7 to 17 (7 to 17 (CSGGLDSVSLA)) interacts with ATP. Cys-185, Cys-193, Cys-196, and Cys-199 together coordinate Zn(2+).

Belongs to the QueC family. The cofactor is Zn(2+).

The enzyme catalyses 7-carboxy-7-deazaguanine + NH4(+) + ATP = 7-cyano-7-deazaguanine + ADP + phosphate + H2O + H(+). It functions in the pathway purine metabolism; 7-cyano-7-deazaguanine biosynthesis. Functionally, catalyzes the ATP-dependent conversion of 7-carboxy-7-deazaguanine (CDG) to 7-cyano-7-deazaguanine (preQ(0)). The polypeptide is 7-cyano-7-deazaguanine synthase 1 (Mesorhizobium japonicum (strain LMG 29417 / CECT 9101 / MAFF 303099) (Mesorhizobium loti (strain MAFF 303099))).